The following is a 180-amino-acid chain: Crossover junction endodeoxyribonuclease RuvC (180 aa).

Residues D7, E66, and D138 contribute to the active site. Mg(2+)-binding residues include D7, E66, and D138.

The protein belongs to the RuvC family. As to quaternary structure, homodimer which binds Holliday junction (HJ) DNA. The HJ becomes 2-fold symmetrical on binding to RuvC with unstacked arms; it has a different conformation from HJ DNA in complex with RuvA. In the full resolvosome a probable DNA-RuvA(4)-RuvB(12)-RuvC(2) complex forms which resolves the HJ. The cofactor is Mg(2+).

The protein localises to the cytoplasm. The catalysed reaction is Endonucleolytic cleavage at a junction such as a reciprocal single-stranded crossover between two homologous DNA duplexes (Holliday junction).. The RuvA-RuvB-RuvC complex processes Holliday junction (HJ) DNA during genetic recombination and DNA repair. Endonuclease that resolves HJ intermediates. Cleaves cruciform DNA by making single-stranded nicks across the HJ at symmetrical positions within the homologous arms, yielding a 5'-phosphate and a 3'-hydroxyl group; requires a central core of homology in the junction. The consensus cleavage sequence is 5'-(A/T)TT(C/G)-3'. Cleavage occurs on the 3'-side of the TT dinucleotide at the point of strand exchange. HJ branch migration catalyzed by RuvA-RuvB allows RuvC to scan DNA until it finds its consensus sequence, where it cleaves and resolves the cruciform DNA. The protein is Crossover junction endodeoxyribonuclease RuvC of Burkholderia pseudomallei (strain 668).